Here is a 131-residue protein sequence, read N- to C-terminus: Large ribosomal subunit protein bL17 (131 aa).

The protein belongs to the bacterial ribosomal protein bL17 family. Part of the 50S ribosomal subunit. Contacts protein L32.

The sequence is that of Large ribosomal subunit protein bL17 from Herminiimonas arsenicoxydans.